A 514-amino-acid chain; its full sequence is 2,3-bisphosphoglycerate-independent phosphoglycerate mutase (514 aa).

Aspartate 14 and serine 64 together coordinate Mn(2+). Serine 64 functions as the Phosphoserine intermediate in the catalytic mechanism. Residues histidine 125, 155–156 (RD), arginine 187, arginine 193, 263–266 (RADR), and lysine 336 each bind substrate. Residues aspartate 403, histidine 407, aspartate 444, histidine 445, and histidine 463 each coordinate Mn(2+).

Belongs to the BPG-independent phosphoglycerate mutase family. In terms of assembly, monomer. Mn(2+) serves as cofactor.

The catalysed reaction is (2R)-2-phosphoglycerate = (2R)-3-phosphoglycerate. It participates in carbohydrate degradation; glycolysis; pyruvate from D-glyceraldehyde 3-phosphate: step 3/5. Its function is as follows. Catalyzes the interconversion of 2-phosphoglycerate and 3-phosphoglycerate. This chain is 2,3-bisphosphoglycerate-independent phosphoglycerate mutase, found in Salmonella paratyphi B (strain ATCC BAA-1250 / SPB7).